The sequence spans 509 residues: 2-isopropylmalate synthase (509 aa).

One can recognise a Pyruvate carboxyltransferase domain in the interval 5–267; the sequence is IQIFDTTLRD…QTALNLEETK (263 aa). 4 residues coordinate Mn(2+): Asp14, His202, His204, and Asn238. Positions 391–509 are regulatory domain; the sequence is KLETLQLQYV…AAENVEKVGN (119 aa).

This sequence belongs to the alpha-IPM synthase/homocitrate synthase family. LeuA type 1 subfamily. Homodimer. It depends on Mn(2+) as a cofactor.

It localises to the cytoplasm. The catalysed reaction is 3-methyl-2-oxobutanoate + acetyl-CoA + H2O = (2S)-2-isopropylmalate + CoA + H(+). Its pathway is amino-acid biosynthesis; L-leucine biosynthesis; L-leucine from 3-methyl-2-oxobutanoate: step 1/4. Catalyzes the condensation of the acetyl group of acetyl-CoA with 3-methyl-2-oxobutanoate (2-ketoisovalerate) to form 3-carboxy-3-hydroxy-4-methylpentanoate (2-isopropylmalate). In Staphylococcus aureus (strain MRSA252), this protein is 2-isopropylmalate synthase.